The chain runs to 208 residues: GTP cyclohydrolase 1 (208 aa).

The Zn(2+) site is built by C89, H92, and C163.

Belongs to the GTP cyclohydrolase I family. As to quaternary structure, homomer.

It catalyses the reaction GTP + H2O = 7,8-dihydroneopterin 3'-triphosphate + formate + H(+). The protein operates within cofactor biosynthesis; 7,8-dihydroneopterin triphosphate biosynthesis; 7,8-dihydroneopterin triphosphate from GTP: step 1/1. This chain is GTP cyclohydrolase 1, found in Saccharolobus islandicus (strain L.S.2.15 / Lassen #1) (Sulfolobus islandicus).